Consider the following 137-residue polypeptide: Translation initiation factor 2 subunit beta (137 aa).

It belongs to the eIF-2-beta/eIF-5 family. In terms of assembly, heterotrimer composed of an alpha, a beta and a gamma chain.

EIF-2 functions in the early steps of protein synthesis by forming a ternary complex with GTP and initiator tRNA. This chain is Translation initiation factor 2 subunit beta (eif2b), found in Archaeoglobus fulgidus (strain ATCC 49558 / DSM 4304 / JCM 9628 / NBRC 100126 / VC-16).